The sequence spans 578 residues: Moesin/ezrin/radixin homolog 1 (578 aa).

Residues 1–296 form the FERM domain; sequence MSPKALNVRV…GNHELYMRRR (296 aa). Residues 463–555 form a disordered region; sequence ASTTPQHHHV…HRENVRQGRD (93 aa). Over residues 475 to 484 the composition is skewed to acidic residues; it reads DENENEEELT. Residues 492–555 are compositionally biased toward basic and acidic residues; the sequence is VSRDLDTDEH…HRENVRQGRD (64 aa). At Thr559 the chain carries Phosphothreonine.

In terms of assembly, interacts with wgn. Interacts with Mer and arm at the adherens junction. Interacts with cytoskeletal actin at apical buds of microvilli in the precellularised embryo. Interacts with PCID2 (possibly via FERM domain). Phosphorylated on Thr-559. In the oocyte this phosphorylation is induced by phosphatidylinositol 4,5-bisphosphate (PtdIns[4,5]P(2)) generated by sktl.

It is found in the cell junction. Its subcellular location is the adherens junction. It localises to the cell projection. The protein resides in the microvillus. The protein localises to the rhabdomere. It is found in the cell membrane. Its subcellular location is the cytoplasm. It localises to the cytoskeleton. The protein resides in the cell cortex. The protein localises to the cilium. It is found in the flagellum. Its subcellular location is the nucleus. It localises to the nucleoplasm. The protein resides in the chromosome. Its function is as follows. Involved in connections of major cytoskeletal structures to the plasma membrane. Together with wgn, involved in control of axon targeting of R8 and R2-R5 photoreceptors, independent of egr. In the nucleus, recruited to sites of active transcription by RNA polymerase II where it has a role in nuclear mRNA export together with the mRNA export factor PCID2 and other messenger ribonucleoprotein (mRNP) particles. The sequence is that of Moesin/ezrin/radixin homolog 1 (Moe) from Drosophila melanogaster (Fruit fly).